The following is a 211-amino-acid chain: Flagellar calcium-binding protein (211 aa).

The disordered stretch occupies residues 1 to 29 (MGACGSKGSTSDKGLASDKDGKKAKDRKE). Residues 15–29 (LASDKDGKKAKDRKE) show a composition bias toward basic and acidic residues. EF-hand domains follow at residues 45–80 (EAKQRRIELFKKFDKNETGKLCYDEVHSGCLEVLKL), 81–116 (DEFTPRVRDITKRAFDKARALGSKLENKGSEDFVEF), 127–162 (YDFFELTVMFDEIDASGNMLVDEEELKRAVPKLEAW), and 164–199 (AKVEDPAALFKELDKNGTGSVTFDEFAAWASAVKLD). The Ca(2+) site is built by Asp-58, Asn-60, Thr-62, Lys-64, and Glu-69. Asp-140, Ser-142, Asn-144, Glu-151, Asp-177, Asn-179, Thr-181, Ser-183, and Glu-188 together coordinate Ca(2+).

The protein belongs to the calflagin family.

It localises to the cell projection. The protein resides in the cilium. It is found in the flagellum. In terms of biological role, may contribute to the rapid motility of the trypanosomes, playing a role either in flagellar structure or in calcium metabolism. Could alternate between a GDP-bound inactive form to a calcium/GTP-bound active form. This is Flagellar calcium-binding protein (FCABP) from Trypanosoma cruzi.